The primary structure comprises 428 residues: MLDPKFLRNELEVTAERLATRGFILDIAHLTQLEEKRKSLQVATEELQASRNAISKSIGQAKARGEDVEAIMAQVGDLGSQLDAKKIELAAVLEEVNAIAMSMPNLPDESAPIGADETENVEVRRWGTPRTFDFPIKDHIDLGEGLNGLDFKNAVKITGSRFIVMKGQVARLNRAIGQFMLDLHTTEHGYTEAYVPLLVNEASLLGTGQLPKFGEDLFHTKPATEEGQGLSLIPTAEVPLTNLVRDSIVDEDELPIKLTAHTACFRSEAGSYGKDTRGLIRQHQFDKVEMVQIVKPEDSMAALEALTGHAETVLQRLGLPYRTVILCTGDMGFGSSKTYDIEVWLPAQNTYREISSCSNMKDFQARRMQARYRVKADNKPALLHTLNGSGLAVGRTLVAILENYQNADGSITIPEVLRPYMGGLTQIG.

235 to 237 serves as a coordination point for L-serine; the sequence is TAE. Residue 266 to 268 coordinates ATP; that stretch reads RSE. Residue glutamate 289 coordinates L-serine. Residue 353-356 participates in ATP binding; the sequence is EISS. L-serine is bound at residue serine 389.

The protein belongs to the class-II aminoacyl-tRNA synthetase family. Type-1 seryl-tRNA synthetase subfamily. As to quaternary structure, homodimer. The tRNA molecule binds across the dimer.

It is found in the cytoplasm. The catalysed reaction is tRNA(Ser) + L-serine + ATP = L-seryl-tRNA(Ser) + AMP + diphosphate + H(+). It carries out the reaction tRNA(Sec) + L-serine + ATP = L-seryl-tRNA(Sec) + AMP + diphosphate + H(+). The protein operates within aminoacyl-tRNA biosynthesis; selenocysteinyl-tRNA(Sec) biosynthesis; L-seryl-tRNA(Sec) from L-serine and tRNA(Sec): step 1/1. In terms of biological role, catalyzes the attachment of serine to tRNA(Ser). Is also able to aminoacylate tRNA(Sec) with serine, to form the misacylated tRNA L-seryl-tRNA(Sec), which will be further converted into selenocysteinyl-tRNA(Sec). The protein is Serine--tRNA ligase of Shewanella baltica (strain OS185).